The following is a 301-amino-acid chain: Probable porphobilinogen deaminase (301 aa).

The residue at position 241 (C241) is an S-(dipyrrolylmethanemethyl)cysteine.

It belongs to the HMBS family. The cofactor is dipyrromethane.

It catalyses the reaction 4 porphobilinogen + H2O = hydroxymethylbilane + 4 NH4(+). It participates in porphyrin-containing compound metabolism; protoporphyrin-IX biosynthesis; coproporphyrinogen-III from 5-aminolevulinate: step 2/4. Functionally, tetrapolymerization of the monopyrrole PBG into the hydroxymethylbilane pre-uroporphyrinogen in several discrete steps. This Pyrobaculum islandicum (strain DSM 4184 / JCM 9189 / GEO3) protein is Probable porphobilinogen deaminase.